Here is a 183-residue protein sequence, read N- to C-terminus: Caspase recruitment domain-containing protein 19 (183 aa).

Cysteine 7 and cysteine 77 are joined by a disulfide. The CARD domain occupies 8–99; it reads DRLVQDTPFL…PLHSCLPSRH (92 aa). The helical transmembrane segment at 122–142 threads the bilayer; that stretch reads GPVAFLTCLGLAAGLALLIYC.

In terms of assembly, associates with BCL10 by CARD-CARD interaction.

Its subcellular location is the endoplasmic reticulum membrane. The protein resides in the mitochondrion membrane. Plays a role in inhibiting the effects of BCL10-induced activation of NF-kappa-B. May inhibit the phosphorylation of BCL10 in a CARD-dependent manner. The chain is Caspase recruitment domain-containing protein 19 (CARD19) from Bos taurus (Bovine).